We begin with the raw amino-acid sequence, 253 residues long: Histone-arginine methyltransferase METTL23 (253 aa).

A disordered region spans residues 1–23 (MDSVRPRAPWAPPPDPASLDSPT).

It belongs to the methyltransferase superfamily. METTL23 family. Interacts with HSPA5, HSP90B1, TUBULIN, UGGT1 and UGGT2. Interacts with TET3. Interacts with STPG4. As to expression, ubiquitously expressed.

The protein localises to the nucleus. It localises to the cytoplasm. The catalysed reaction is L-arginyl-[protein] + 2 S-adenosyl-L-methionine = N(omega),N(omega)-dimethyl-L-arginyl-[protein] + 2 S-adenosyl-L-homocysteine + 2 H(+). Histone methyltransferase that dimethylates histone H3 at 'Arg-17', forming asymmetric dimethylarginine (H3R17me2a), leading to activate transcription via chromatin remodeling. Maternal factor involved in epigenetic chromatin reprogramming of the paternal genome in the zygote: mediates H3R17me2a, promoting histone H3.3 incorporation in the male pronucleus, leading to TET3 recruitment and subsequent DNA demethylation. This Mus musculus (Mouse) protein is Histone-arginine methyltransferase METTL23.